The chain runs to 2491 residues: Cation-independent mannose-6-phosphate receptor (2491 aa).

The N-terminal stretch at 1 to 40 (MGAAAGRSPHLGPAPARRPQRSLLLLQLLLLVAAPGSTQA) is a signal peptide. The Lumenal portion of the chain corresponds to 41 to 2304 (QAAPFPELCS…MHKGLSERSQ (2264 aa)). MRH domains follow at residues 47 to 163 (ELCS…ACKK), 172 to 320 (VPCY…ACHR), 326 to 468 (KTCS…ACVK), 473 to 619 (LLCG…ACVL), 625 to 762 (ENCT…ACPE), 765 to 924 (LECV…ACPI), 932 to 1079 (QACS…ACVP), 1082 to 1219 (VDCQ…ACPV), 1225 to 1363 (DNCE…ACPP), 1367 to 1508 (TECS…ACPM), 1514 to 1648 (DDCQ…ACEQ), and 1650 to 1797 (TECS…VCPD). Cystine bridges form between C49–C69 and C77–C84. N112 carries N-linked (GlcNAc...) asparagine glycosylation. Disulfide bonds link C117–C149, C134–C161, C174–C212, C228–C235, C275–C306, C288–C318, C328–C366, and C374–C382. N-linked (GlcNAc...) asparagine glycans are attached at residues N400 and N435. 4 cysteine pairs are disulfide-bonded: C420–C454, C434–C466, C475–C519, and C531–C538. 2 N-linked (GlcNAc...) asparagine glycosylation sites follow: N543 and N581. Disulfide bonds link C572/C605 and C586/C617. N626 is a glycosylation site (N-linked (GlcNAc...) asparagine). Disulfide bonds link C627/C664, C672/C679, C731/C760, C767/C814, and C823/C830. N-linked (GlcNAc...) asparagine glycosylation occurs at N747. N-linked (GlcNAc...) asparagine glycosylation occurs at N871. 7 disulfide bridges follow: C875/C910, C893/C922, C934/C970, C976/C987, C1042/C1077, C1084/C1125, and C1134/C1142. N951 and N957 each carry an N-linked (GlcNAc...) asparagine glycan. N1164 carries an N-linked (GlcNAc...) asparagine glycan. Cystine bridges form between C1177–C1205, C1190–C1217, C1227–C1262, and C1270–C1282. An N-linked (GlcNAc...) asparagine glycan is attached at N1246. An N-linked (GlcNAc...) asparagine glycan is attached at N1312. 24 disulfide bridges follow: C1319/C1349, C1333/C1361, C1369/C1408, C1420/C1427, C1461/C1494, C1476/C1506, C1516/C1553, C1559/C1566, C1598/C1634, C1614/C1646, C1652/C1695, C1706/C1713, C1750/C1783, C1766/C1795, C1804/C1839, C1850/C1856, C1893/C1975, C1903/C1927, C1917/C1942, C1957/C1987, C1994/C2029, C2039/C2046, C2082/C2113, and C2096/C2125. N-linked (GlcNAc...) asparagine glycosylation occurs at N1656. N1757 is a glycosylation site (N-linked (GlcNAc...) asparagine). The Fibronectin type-II domain occupies 1802–1989 (DGCTLTDEQL…EWKTKVVCPP (188 aa)). A glycan (N-linked (GlcNAc...) asparagine) is linked at N1816. MRH domains follow at residues 1992-2127 (LECK…ACAV) and 2135-2280 (VNGT…VCPL). N-linked (GlcNAc...) asparagine glycosylation is present at N2085. Residue N2136 is glycosylated (N-linked (GlcNAc...) asparagine). 3 disulfide bridges follow: C2188/C2194, C2232/C2266, and C2248/C2278. A helical transmembrane segment spans residues 2305–2327 (AVGAVLSLLLVALTCCLLALLLY). At 2328–2491 (KKERRETVIS…DDSDEDLLHI (164 aa)) the chain is on the cytoplasmic side. K2352 bears the N6-acetyllysine mark. S2409 bears the Phosphoserine mark. The segment at 2424–2491 (GRGAGAESSH…DDSDEDLLHI (68 aa)) is disordered. R2425 carries the post-translational modification Omega-N-methylarginine. The span at 2444-2459 (QEREDDRVGLVRGEKA) shows a compositional bias: basic and acidic residues. A compositionally biased stretch (polar residues) spans 2464-2477 (SSSAQQKTVSSTKL). A phosphoserine mark is found at S2479 and S2484. Over residues 2479-2491 (SFHDDSDEDLLHI) the composition is skewed to basic and acidic residues.

The protein belongs to the MRL1/IGF2R family. As to quaternary structure, binds HA-I and HA-II plasma membrane adapters. Interacts with DPP4; the interaction is direct. Binds GGA1, GGA2 and GGA3. Interacts with the heterotrimeric retromer cargo-selective complex (CSC), formed by VPS26 (VPS26A or VPS26B), VPS29 and VPS35; which is involved in retrograde trafficking of the receptor from endosomes to the Golgi apparatus. In terms of processing, palmitoylated. Undergoes cysteine S-palmitoylation which promotes interaction with the retromer cargo-selective complex which mediates its retrograde trafficking to the Golgi apparatus.

It is found in the golgi apparatus membrane. The protein resides in the endosome membrane. Its function is as follows. Mediates the transport of phosphorylated lysosomal enzymes from the Golgi complex and the cell surface to lysosomes. Lysosomal enzymes bearing phosphomannosyl residues bind specifically to mannose-6-phosphate receptors in the Golgi apparatus and the resulting receptor-ligand complex is transported to an acidic prelysosomal compartment where the low pH mediates the dissociation of the complex. The receptor is then recycled back to the Golgi for another round of trafficking through its binding to the retromer. This receptor also binds IGF2. Acts as a positive regulator of T-cell coactivation by binding DPP4. This Homo sapiens (Human) protein is Cation-independent mannose-6-phosphate receptor (IGF2R).